A 509-amino-acid chain; its full sequence is Maturase K (509 aa).

It belongs to the intron maturase 2 family. MatK subfamily.

The protein resides in the plastid. The protein localises to the chloroplast. Usually encoded in the trnK tRNA gene intron. Probably assists in splicing its own and other chloroplast group II introns. This Clematis lasiantha (Pipestem clematis) protein is Maturase K.